The chain runs to 2244 residues: Multifunctional protein ura1 (2244 aa).

The segment at 1–437 (MSGLLPSLSS…GPRDTEFLFD (437 aa)) is GATase (Glutamine amidotransferase). Positions 16–44 (QSEALGMPRTHGPKPSENDPKEPTCSPSP) are disordered. L-glutamine is bound by residues serine 101, glycine 309, and glycine 311. A Glutamine amidotransferase type-1 domain is found at 264–449 (RILVIDVGMK…IDVVKRSADA (186 aa)). The active-site Nucleophile; for GATase activity is cysteine 338. Glutamine 342, asparagine 380, glycine 382, and tyrosine 383 together coordinate L-glutamine. Catalysis depends on for GATase activity residues histidine 422 and glutamate 424. Positions 438–477 (VFIDVVKRSADAKSLQPFKLPGGTIEENRSRHPLVDAKRV) are linker. Residues 478–1014 (LILGSGGLSI…VEHDIHFNDK (537 aa)) form a CPSase A region. A CPSase (Carbamoyl phosphate synthase) region spans residues 478–1514 (LILGSGGLSI…TNVKCAKLMI (1037 aa)). ATP is bound by residues arginine 594, arginine 634, glycine 640, glycine 641, arginine 671, methionine 673, glutamate 678, glycine 704, isoleucine 705, histidine 706, glutamine 747, and glutamate 761. The ATP-grasp 1 domain occupies 598–790 (ARAMDEINEK…LAFTAAKLGL (193 aa)). Mg(2+) contacts are provided by glutamine 747, glutamate 761, and asparagine 763. Glutamine 747, glutamate 761, and asparagine 763 together coordinate Mn(2+). The CPSase B stretch occupies residues 1015 to 1514 (GVMVLGSGVY…TNVKCAKLMI (500 aa)). Serine 1119 is subject to Phosphoserine. One can recognise an ATP-grasp 2 domain in the interval 1133-1324 (SRMLDDIGVD…MISMATDVIM (192 aa)). Residues arginine 1169, lysine 1208, isoleucine 1210, glutamate 1215, glycine 1240, valine 1241, histidine 1242, serine 1243, glutamine 1283, and glutamate 1295 each coordinate ATP. Positions 1283, 1295, and 1297 each coordinate Mg(2+). Glutamine 1283, glutamate 1295, and asparagine 1297 together coordinate Mn(2+). The 163-residue stretch at 1390–1552 (FRLPKKNILI…INISAFLPEF (163 aa)) folds into the MGS-like domain. The interval 1515-1524 (EAICRNLDFS) is linker. The tract at residues 1525-1853 (LSTVDFQSSF…FDGHDVFFDG (329 aa)) is defective DHOase domain. Positions 1854–1935 (ELNFEHTYGR…VQLINSSPFY (82 aa)) are linker. Residues serine 1881 and serine 1885 each carry the phosphoserine modification. Residues 1936–2244 (RKHIISVHQV…CVMGATEVAN (309 aa)) form an ATCase (Aspartate transcarbamylase) region. Positions 1988 and 1989 each coordinate carbamoyl phosphate. Lysine 2016 contacts L-aspartate. Arginine 2037, histidine 2065, and glutamine 2068 together coordinate carbamoyl phosphate. L-aspartate contacts are provided by arginine 2098 and arginine 2160. Leucine 2199 and proline 2200 together coordinate carbamoyl phosphate.

It in the N-terminal section; belongs to the CarA family. This sequence in the 2nd section; belongs to the CarB family. In the 3rd section; belongs to the metallo-dependent hydrolases superfamily. DHOase family. CAD subfamily. The protein in the C-terminal section; belongs to the aspartate/ornithine carbamoyltransferase superfamily. ATCase family. It depends on Mg(2+) as a cofactor. Mn(2+) is required as a cofactor.

It carries out the reaction hydrogencarbonate + L-glutamine + 2 ATP + H2O = carbamoyl phosphate + L-glutamate + 2 ADP + phosphate + 2 H(+). It catalyses the reaction L-glutamine + H2O = L-glutamate + NH4(+). The enzyme catalyses hydrogencarbonate + NH4(+) + 2 ATP = carbamoyl phosphate + 2 ADP + phosphate + 2 H(+). The catalysed reaction is carbamoyl phosphate + L-aspartate = N-carbamoyl-L-aspartate + phosphate + H(+). Its pathway is pyrimidine metabolism; UMP biosynthesis via de novo pathway; (S)-dihydroorotate from bicarbonate: step 1/3. The protein operates within pyrimidine metabolism; UMP biosynthesis via de novo pathway; (S)-dihydroorotate from bicarbonate: step 2/3. Its activity is regulated as follows. Both CPSase and ATCase activities are feedback inhibited by the end product UTP. Multifunctional protein that encodes the first 2 enzymatic activities of the de novo pyrimidine pathway: carbamoylphosphate synthetase (CPSase; EC 6.3.5.5) and aspartate transcarbamylase (ATCase; EC 2.1.3.2). The CPSase-function is accomplished in 2 steps, by a glutamine-dependent amidotransferase activity (GATase) that binds and cleaves glutamine to produce ammonia, followed by an ammonium-dependent carbamoyl phosphate synthetase, which reacts with the ammonia, hydrogencarbonate and ATP to form carbamoyl phosphate. The endogenously produced carbamoyl phosphate is sequestered and channeled to the ATCase active site. ATCase then catalyzes the formation of carbamoyl-L-aspartate from L-aspartate and carbamoyl phosphate. The protein is Multifunctional protein ura1 (ura1) of Schizosaccharomyces pombe (strain 972 / ATCC 24843) (Fission yeast).